The following is a 319-amino-acid chain: Acetyl esterase (319 aa).

Residues 91 to 93 carry the Involved in the stabilization of the negatively charged intermediate by the formation of the oxyanion hole motif; the sequence is HGG. Residues S165, D262, and H292 contribute to the active site.

The protein belongs to the 'GDXG' lipolytic enzyme family. As to quaternary structure, homodimer. Interacts with MalT and MelA.

The protein resides in the cytoplasm. Its function is as follows. Displays esterase activity towards short chain fatty esters (acyl chain length of up to 8 carbons). Able to hydrolyze triacetylglycerol (triacetin) and tributyrylglycerol (tributyrin), but not trioleylglycerol (triolein) or cholesterol oleate. Negatively regulates MalT activity by antagonizing maltotriose binding. Inhibits MelA galactosidase activity. This chain is Acetyl esterase, found in Escherichia coli O81 (strain ED1a).